The sequence spans 68 residues: U-actitoxin-Avt1 (68 aa).

The first 22 residues, 1–22, serve as a signal peptide directing secretion; sequence MNSKAIISVFLIMLVVVSCTQA. Positions 23 to 40 are excised as a propeptide; it reads TYETEDDDEPGPRHSEKR. The segment at 24-50 is disordered; that stretch reads YETEDDDEPGPRHSEKRSCARGCGGDS. A compositionally biased stretch (basic and acidic residues) spans 32–41; it reads PGPRHSEKRS. Cystine bridges form between C42–C54, C46–C59, and C52–C66.

Functionally, stable protein with probable toxin activity. Does not show activity on all channels tested. Shows no hemolytic activity on rat erythrocytes. This chain is U-actitoxin-Avt1, found in Aulactinia veratra (Green snakelock anemone).